An 83-amino-acid chain; its full sequence is Bowman-Birk type proteinase inhibitor (83 aa).

Cystine bridges form between C18–C72, C19–C34, C22–C68, C24–C32, C42–C49, C46–C61, and C51–C59.

Belongs to the Bowman-Birk serine protease inhibitor family.

This Phaseolus lunatus (Lima bean) protein is Bowman-Birk type proteinase inhibitor.